The primary structure comprises 180 residues: ATP-dependent protease subunit HslV (180 aa).

Thr-5 is an active-site residue. Na(+)-binding residues include Gly-165, Cys-168, and Thr-171.

Belongs to the peptidase T1B family. HslV subfamily. A double ring-shaped homohexamer of HslV is capped on each side by a ring-shaped HslU homohexamer. The assembly of the HslU/HslV complex is dependent on binding of ATP.

It localises to the cytoplasm. It catalyses the reaction ATP-dependent cleavage of peptide bonds with broad specificity.. Its activity is regulated as follows. Allosterically activated by HslU binding. Its function is as follows. Protease subunit of a proteasome-like degradation complex believed to be a general protein degrading machinery. The chain is ATP-dependent protease subunit HslV from Helicobacter pylori (strain ATCC 700392 / 26695) (Campylobacter pylori).